Here is a 311-residue protein sequence, read N- to C-terminus: Olfactory receptor 6C3 (311 aa).

The Extracellular portion of the chain corresponds to 1 to 22; sequence MNHTMVTEFVLLGLSDDPDLQI. N-linked (GlcNAc...) asparagine glycosylation occurs at asparagine 2. The chain crosses the membrane as a helical span at residues 23–43; that stretch reads VIFLFLFITYILSVTGNLTII. Residues 44–51 are Cytoplasmic-facing; sequence TLTFVDSH. The chain crosses the membrane as a helical span at residues 52–72; the sequence is LQTPMYFFLRNFSFLEISFTT. Topologically, residues 73-96 are extracellular; it reads VCIPRFLGAIITRNKTISYNNCAA. Cysteine 94 and cysteine 186 are disulfide-bonded. A helical membrane pass occupies residues 97–117; sequence QLFFFIFMGVTEFYILTAMSY. Topologically, residues 118-136 are cytoplasmic; that stretch reads DRYVAICKPLHYTSIMNRK. Residues 137 to 157 form a helical membrane-spanning segment; it reads LCTLLVLCAWLSGFLTIFPPL. At 158 to 194 the chain is on the extracellular side; sequence MLLLQLDYCASNVIDHFACDYFPLLQLSCSDTWLLEV. The helical transmembrane segment at 195–214 threads the bilayer; it reads IGFYFALVTLLFTLALVILS. At 215 to 234 the chain is on the cytoplasmic side; it reads YMYIIRTILRIPSASQRKKA. The chain crosses the membrane as a helical span at residues 235-255; that stretch reads FSTCSSHMIVISISYGSCIFM. Residues 256-268 are Extracellular-facing; sequence YANPSAKEKASLT. A helical membrane pass occupies residues 269-289; that stretch reads KGIAILNTSVAPMLNPFIYTL. At 290 to 311 the chain is on the cytoplasmic side; sequence RNQQVKQAFKNVVHKVVFYANQ.

This sequence belongs to the G-protein coupled receptor 1 family.

It localises to the cell membrane. Functionally, odorant receptor. The polypeptide is Olfactory receptor 6C3 (OR6C3) (Homo sapiens (Human)).